The following is a 286-amino-acid chain: L-rhamnose-binding lectin CSL1 (286 aa).

2 SUEL-type lectin domains span residues T96–L186 and T193–L280.

In terms of biological role, L-rhamnose binding lectin. Has hemagglutinating activity towards rabbit erythrocytes, but not human type B erythrocytes. Hemagglutinating activity is inhibited by smooth-type lipopolysaccharide (LPS) from K.pneumoniae, E.coli K-235, S.flexneri 1A, A.salmonicida and S.minnesota and rough-type LPS from S.flexneri, but not by rough-type LPS from E.coli K12 and E.coli EH100. Agglutinates E.coli K12 and B.subtilis. This Oncorhynchus keta (Chum salmon) protein is L-rhamnose-binding lectin CSL1.